We begin with the raw amino-acid sequence, 161 residues long: 2-C-methyl-D-erythritol 2,4-cyclodiphosphate synthase (161 aa).

Asp-13 and His-15 together coordinate a divalent metal cation. Residues 13 to 15 (DAH) and 40 to 41 (HS) contribute to the 4-CDP-2-C-methyl-D-erythritol 2-phosphate site. His-48 contacts a divalent metal cation. Residue 62-64 (DIG) coordinates 4-CDP-2-C-methyl-D-erythritol 2-phosphate.

It belongs to the IspF family. In terms of assembly, homotrimer. It depends on a divalent metal cation as a cofactor.

The catalysed reaction is 4-CDP-2-C-methyl-D-erythritol 2-phosphate = 2-C-methyl-D-erythritol 2,4-cyclic diphosphate + CMP. It functions in the pathway isoprenoid biosynthesis; isopentenyl diphosphate biosynthesis via DXP pathway; isopentenyl diphosphate from 1-deoxy-D-xylulose 5-phosphate: step 4/6. In terms of biological role, involved in the biosynthesis of isopentenyl diphosphate (IPP) and dimethylallyl diphosphate (DMAPP), two major building blocks of isoprenoid compounds. Catalyzes the conversion of 4-diphosphocytidyl-2-C-methyl-D-erythritol 2-phosphate (CDP-ME2P) to 2-C-methyl-D-erythritol 2,4-cyclodiphosphate (ME-CPP) with a corresponding release of cytidine 5-monophosphate (CMP). This is 2-C-methyl-D-erythritol 2,4-cyclodiphosphate synthase from Deinococcus radiodurans (strain ATCC 13939 / DSM 20539 / JCM 16871 / CCUG 27074 / LMG 4051 / NBRC 15346 / NCIMB 9279 / VKM B-1422 / R1).